We begin with the raw amino-acid sequence, 493 residues long: MSELTALTIAEARDKLKAKAITATELTDAYLSAIDAANDAINAYVAVTHDQARSMAKASDERIAKGEAGALEGIPLGVKDLFATKGVHTQACSHILDGFKPEYESTVTANLWADGAVMLGKLNMDEFAMGSSNETSYYGPVKNPWRAKGSNADLVPGGSSGGSAAAVAAHLCAGATATDTGGSIRQPAAFTGTVGIKPTYGRVSRWGTVAFASSLDQAGPIARDVRDAAILMKSTASLDLKDTTSVDLPVPDYEAALGRSVKGMKIGIPREYRVDGMPGEIEELWQKGIQYLKDAGAEIVDISLPHTKYALPAYYIVAPAEASSNLARYDGVRYGLRVPGKDIADMYEQTRAAGFGKEVKRRIMIGTYVLSAGYYDAYYLRAQKVRTLIKKDFEDVFAKGVDAILTPATPSAAFGLADEVLANDPVKMYLNDIFTVTVNMAGLPGIAVPAGLNGQGLPLGLQLIGRPFEEETLFQAAHVIEQAAGRFTPAKWW.

Residues Lys-79 and Ser-159 each act as charge relay system in the active site. Ser-183 (acyl-ester intermediate) is an active-site residue.

This sequence belongs to the amidase family. GatA subfamily. Heterotrimer of A, B and C subunits.

The enzyme catalyses L-glutamyl-tRNA(Gln) + L-glutamine + ATP + H2O = L-glutaminyl-tRNA(Gln) + L-glutamate + ADP + phosphate + H(+). In terms of biological role, allows the formation of correctly charged Gln-tRNA(Gln) through the transamidation of misacylated Glu-tRNA(Gln) in organisms which lack glutaminyl-tRNA synthetase. The reaction takes place in the presence of glutamine and ATP through an activated gamma-phospho-Glu-tRNA(Gln). In Brucella suis (strain ATCC 23445 / NCTC 10510), this protein is Glutamyl-tRNA(Gln) amidotransferase subunit A.